A 413-amino-acid chain; its full sequence is Glucose-1-phosphate adenylyltransferase (413 aa).

Alpha-D-glucose 1-phosphate contacts are provided by residues G169, 184–185 (EK), and S201.

It belongs to the bacterial/plant glucose-1-phosphate adenylyltransferase family. In terms of assembly, homotetramer.

The catalysed reaction is alpha-D-glucose 1-phosphate + ATP + H(+) = ADP-alpha-D-glucose + diphosphate. It functions in the pathway glycan biosynthesis; glycogen biosynthesis. Functionally, involved in the biosynthesis of ADP-glucose, a building block required for the elongation reactions to produce glycogen. Catalyzes the reaction between ATP and alpha-D-glucose 1-phosphate (G1P) to produce pyrophosphate and ADP-Glc. This Trichlorobacter lovleyi (strain ATCC BAA-1151 / DSM 17278 / SZ) (Geobacter lovleyi) protein is Glucose-1-phosphate adenylyltransferase.